We begin with the raw amino-acid sequence, 342 residues long: Foldase protein PrsA (342 aa).

The signal sequence occupies residues 1–22 (MVSVKKIVASALVGVLMFSAVG). The N-palmitoyl cysteine moiety is linked to residue cysteine 23. The S-diacylglycerol cysteine moiety is linked to residue cysteine 23. Residues 189–284 (DSGVLTKHLL…FGYHIIQAGA (96 aa)) form the PpiC domain.

It belongs to the PrsA family.

It is found in the cell membrane. The catalysed reaction is [protein]-peptidylproline (omega=180) = [protein]-peptidylproline (omega=0). In terms of biological role, plays a major role in protein secretion by helping the post-translocational extracellular folding of several secreted proteins. The protein is Foldase protein PrsA of Clostridium perfringens (strain 13 / Type A).